The sequence spans 392 residues: MPLEVVVELQIRAISCPGVFLPGKQDVYLGVYLMNQYLETNSFPSAFPIMIQESMRFEKVFESAVDPGAVVDLLEMWDELAYYEENTRDFLFPEPKLTPSHPRRCREVLMKTALGFPGIAPKIEFSTRTAIRECVFLHRNRFLEERHESRRPLSTSHEPIFPLNTIKMKLKENNLNRLPKGMQARAPSQYSTRHFFQDQPAQLNLGNNFKISGGSKPPFVVRHVDSAKPFGENISEHHLRRSRRKSKFSDFPFPTRRASSLDSLAANVKVIKEPDERIVLRSDSSSCLDSSQFGKSSSSKQGDADFHGKASFATYQHSTSPGPLDQPLLRERFHPGSQSTWKNIHERVCSLLTSHRAQLHQNKEDSTSEVNYIIERPSYPLKKYSLHEQRYF.

A phosphoserine mark is found at Ser260 and Ser263. Residues 286 to 301 show a composition bias toward low complexity; sequence SCLDSSQFGKSSSSKQ. Residues 286–305 form a disordered region; that stretch reads SCLDSSQFGKSSSSKQGDAD.

It belongs to the SPATA6 family.

In Homo sapiens (Human), this protein is Spermatogenesis associated 6-like protein (SPATA6L).